The sequence spans 238 residues: Small ribosomal subunit protein uS2 (238 aa).

It belongs to the universal ribosomal protein uS2 family.

In Actinobacillus pleuropneumoniae serotype 5b (strain L20), this protein is Small ribosomal subunit protein uS2.